The following is a 435-amino-acid chain: AP-2 complex subunit mu (435 aa).

Positions 170–434 (RNELFLDVLE…IGRSGIYETR (265 aa)) constitute an MHD domain. A 1,2-diacyl-sn-glycero-3-phospho-(1D-myo-inositol-3,4,5-trisphosphate)-binding residues include lysine 341, lysine 345, and lysine 354.

Belongs to the adaptor complexes medium subunit family. In terms of assembly, adaptor protein complex 2 (AP-2) is a heterotetramer composed of two large adaptins (alpha-type subunit and beta-type subunit), a medium adaptin (mu-type subunit) and a small adaptin (sigma-type subunit).

The protein localises to the cell membrane. It localises to the membrane. It is found in the coated pit. In terms of biological role, component of the adaptor complexes which link clathrin to receptors in coated vesicles. Clathrin-associated protein complexes are believed to interact with the cytoplasmic tails of membrane proteins, leading to their selection and concentration. AP50 is a subunit of the plasma membrane adaptor. The complex binds polyphosphoinositide-containing lipids. This is AP-2 complex subunit mu (ap2m1) from Xenopus tropicalis (Western clawed frog).